The following is a 136-amino-acid chain: MSALVYFSSSSENTHRFMQRLGLPATRIPLNERERIRVDEPYILVVPSYGGGGMAGAVPRQVIRFLNDEHNRARIRGVIASGNRNFGDAWGCAGDVIAQKCGVPWLYRFELMGTQRDIDNVRKGVNEFWQQLSRSA.

The protein belongs to the NrdI family.

Functionally, probably involved in ribonucleotide reductase function. This chain is Protein NrdI, found in Salmonella dublin (strain CT_02021853).